We begin with the raw amino-acid sequence, 251 residues long: Aliphatic sulfonates import ATP-binding protein SsuB (251 aa).

An ABC transporter domain is found at 3–231; the sequence is VSINEVSKYF…PRNKTSQSFQ (229 aa). 39–46 is a binding site for ATP; the sequence is GPSGCGKS.

Belongs to the ABC transporter superfamily. Aliphatic sulfonates importer (TC 3.A.1.17.2) family. As to quaternary structure, the complex is composed of two ATP-binding proteins (SsuB), two transmembrane proteins (SsuC) and a solute-binding protein (SsuA).

Its subcellular location is the cell membrane. The enzyme catalyses ATP + H2O + aliphatic sulfonate-[sulfonate-binding protein]Side 1 = ADP + phosphate + aliphatic sulfonateSide 2 + [sulfonate-binding protein]Side 1.. Its function is as follows. Part of the ABC transporter complex SsuABC involved in aliphatic sulfonates import. Responsible for energy coupling to the transport system. In Bacillus anthracis, this protein is Aliphatic sulfonates import ATP-binding protein SsuB.